We begin with the raw amino-acid sequence, 249 residues long: Voltage-gated potassium channel subunit beta-3 (249 aa).

Residues asparagine 44, serine 74, arginine 75, glutamine 100, tryptophan 129, serine 130, proline 131, leucine 132, alanine 133, cysteine 134, lysine 140, lysine 150, glycine 209, serine 211, glutamine 215, and glutamate 218 each coordinate NADP(+).

The protein belongs to the shaker potassium channel beta subunit family. In terms of assembly, forms heteromultimeric complex with alpha subunits. Interacts with KCNA5 and KCNB2. Strong expression in brain, with highest levels in neocortical and allocortical regions, hippocampus, olfactory bulb and cerebellum. Also strong in kidney. Weak expression in lung, skeletal muscle and heart.

The protein localises to the cytoplasm. In terms of biological role, regulatory subunit of the voltage-gated potassium (Kv) channels composed of pore-forming and potassium-conducting alpha subunits and of regulatory beta subunit. The beta-3/KCNAB3 subunit may mediate closure of potassium channels. Enhances the expression of Kv2.2/KCNB2 alpha subunit-containing Kv channels but not Kv2.1/KCNB1. May display nicotinamide adenine dinucleotide phosphate (NADPH)-dependent aldoketoreductase activity. The binding of oxidized and reduced NADP(H) cofactors may be required for the regulation of potassium channel activity. The chain is Voltage-gated potassium channel subunit beta-3 from Mus musculus (Mouse).